The chain runs to 122 residues: Small ribosomal subunit protein uS13 (122 aa).

Positions 94–122 (LSLPVRGQRTKTNSRTRKGKRKTVAGKKK) are disordered. Residues 101-122 (QRTKTNSRTRKGKRKTVAGKKK) are compositionally biased toward basic residues.

It belongs to the universal ribosomal protein uS13 family. In terms of assembly, part of the 30S ribosomal subunit. Forms a loose heterodimer with protein S19. Forms two bridges to the 50S subunit in the 70S ribosome.

Functionally, located at the top of the head of the 30S subunit, it contacts several helices of the 16S rRNA. In the 70S ribosome it contacts the 23S rRNA (bridge B1a) and protein L5 of the 50S subunit (bridge B1b), connecting the 2 subunits; these bridges are implicated in subunit movement. Contacts the tRNAs in the A and P-sites. This Chlamydia trachomatis serovar A (strain ATCC VR-571B / DSM 19440 / HAR-13) protein is Small ribosomal subunit protein uS13.